Here is a 1257-residue protein sequence, read N- to C-terminus: Pesticidal crystal protein Cry12Aa (1257 aa).

It belongs to the delta endotoxin family.

Functionally, endotoxin with nematicidal activity. This chain is Pesticidal crystal protein Cry12Aa (cry12Aa), found in Bacillus thuringiensis.